The following is a 248-amino-acid chain: Meiotic drive suppressor wtf1 (248 aa).

The interval 30–68 (LLPEYNSDEESTLPPYSDHARVSNPPNTHRENHSSGTTD) is disordered. The next 4 helical transmembrane spans lie at 73–93 (FLIKLLISFTSIILFNAPAVC), 110–130 (WTLIGFWCASSLIIFTFSWYF), 152–172 (IPMAFSEVFLFNILVGSPRVT), and 186–206 (SLADHIIFAILSILVFIVETV).

The protein belongs to the WTF family. Homomer. Interacts with other proteins that exhibit high sequence similarity.

It localises to the spore membrane. The protein localises to the vacuole membrane. Functionally, acts as a suppressor component of the dual wtf meiotic drive system, and can suppress but not confer meiotic drive by compatible poisons. Wtf meiotic drive systems promote unequal transmission of alleles from the parental zygote to progeny spores by encoding a poison and an antidote from the same locus; the poison is trans-acting and forms toxic aggregates in all spores within an ascus, wherease the antidote is spore-specific and targets aggregates for degradation by the vacuole. Meiotic drive by wtf systems therefore lead to poisoning of all progeny that do not inherit the dual poison/antidote allele, or express a compatible antidote. The protein is Meiotic drive suppressor wtf1 of Schizosaccharomyces pombe (Fission yeast).